Consider the following 130-residue polypeptide: Small ribosomal subunit protein uS9 (130 aa).

Positions 98-130 are disordered; the sequence is LKRAGFLTRDARKKERKKYGQPGARKRFQYSKR. Residues 111-130 are compositionally biased toward basic residues; the sequence is KERKKYGQPGARKRFQYSKR.

Belongs to the universal ribosomal protein uS9 family.

The protein is Small ribosomal subunit protein uS9 of Sorangium cellulosum (strain So ce56) (Polyangium cellulosum (strain So ce56)).